A 132-amino-acid polypeptide reads, in one-letter code: Small ribosomal subunit protein uS8 (132 aa).

The protein belongs to the universal ribosomal protein uS8 family. Part of the 30S ribosomal subunit. Contacts proteins S5 and S12.

Its function is as follows. One of the primary rRNA binding proteins, it binds directly to 16S rRNA central domain where it helps coordinate assembly of the platform of the 30S subunit. The polypeptide is Small ribosomal subunit protein uS8 (Baumannia cicadellinicola subsp. Homalodisca coagulata).